The following is a 227-amino-acid chain: Orotidine 5'-phosphate decarboxylase (227 aa).

Substrate is bound by residues aspartate 8, lysine 30, 59–68 (DLKLYDIPYT), threonine 118, arginine 178, glutamine 187, glycine 207, and arginine 208. Lysine 61 acts as the Proton donor in catalysis.

This sequence belongs to the OMP decarboxylase family. Type 1 subfamily. As to quaternary structure, homodimer.

It carries out the reaction orotidine 5'-phosphate + H(+) = UMP + CO2. It participates in pyrimidine metabolism; UMP biosynthesis via de novo pathway; UMP from orotate: step 2/2. Functionally, catalyzes the decarboxylation of orotidine 5'-monophosphate (OMP) to uridine 5'-monophosphate (UMP). The sequence is that of Orotidine 5'-phosphate decarboxylase from Helicobacter pylori (strain J99 / ATCC 700824) (Campylobacter pylori J99).